Consider the following 609-residue polypeptide: Arginine--tRNA ligase (609 aa).

Positions 114–124 match the 'HIGH' region motif; it reads VNPNKELHVGH.

This sequence belongs to the class-I aminoacyl-tRNA synthetase family. As to quaternary structure, monomer.

Its subcellular location is the cytoplasm. It carries out the reaction tRNA(Arg) + L-arginine + ATP = L-arginyl-tRNA(Arg) + AMP + diphosphate. The chain is Arginine--tRNA ligase from Deinococcus radiodurans (strain ATCC 13939 / DSM 20539 / JCM 16871 / CCUG 27074 / LMG 4051 / NBRC 15346 / NCIMB 9279 / VKM B-1422 / R1).